Here is a 338-residue protein sequence, read N- to C-terminus: Ketol-acid reductoisomerase (NADP(+)) (338 aa).

One can recognise a KARI N-terminal Rossmann domain in the interval 3–183; that stretch reads IELLYDADAD…GGARAGVIPT (181 aa). NADP(+) is bound by residues 26–29, Arg49, Ser52, Ser54, and 84–87; these read YGSQ and DTSQ. His109 is an active-site residue. Gly135 contacts NADP(+). One can recognise a KARI C-terminal knotted domain in the interval 184 to 329; that stretch reads TFEAETVTDL…AKLRDLMSWV (146 aa). Mg(2+) is bound by residues Asp192, Glu196, Glu228, and Glu232. Ser253 provides a ligand contact to substrate.

The protein belongs to the ketol-acid reductoisomerase family. It depends on Mg(2+) as a cofactor.

It carries out the reaction (2R)-2,3-dihydroxy-3-methylbutanoate + NADP(+) = (2S)-2-acetolactate + NADPH + H(+). It catalyses the reaction (2R,3R)-2,3-dihydroxy-3-methylpentanoate + NADP(+) = (S)-2-ethyl-2-hydroxy-3-oxobutanoate + NADPH + H(+). It participates in amino-acid biosynthesis; L-isoleucine biosynthesis; L-isoleucine from 2-oxobutanoate: step 2/4. Its pathway is amino-acid biosynthesis; L-valine biosynthesis; L-valine from pyruvate: step 2/4. Its function is as follows. Involved in the biosynthesis of branched-chain amino acids (BCAA). Catalyzes an alkyl-migration followed by a ketol-acid reduction of (S)-2-acetolactate (S2AL) to yield (R)-2,3-dihydroxy-isovalerate. In the isomerase reaction, S2AL is rearranged via a Mg-dependent methyl migration to produce 3-hydroxy-3-methyl-2-ketobutyrate (HMKB). In the reductase reaction, this 2-ketoacid undergoes a metal-dependent reduction by NADPH to yield (R)-2,3-dihydroxy-isovalerate. This chain is Ketol-acid reductoisomerase (NADP(+)), found in Corynebacterium glutamicum (strain ATCC 13032 / DSM 20300 / JCM 1318 / BCRC 11384 / CCUG 27702 / LMG 3730 / NBRC 12168 / NCIMB 10025 / NRRL B-2784 / 534).